The sequence spans 89 residues: Putative regulatory protein CYB_0055 (89 aa).

It belongs to the RemA family.

The polypeptide is Putative regulatory protein CYB_0055 (Synechococcus sp. (strain JA-2-3B'a(2-13)) (Cyanobacteria bacterium Yellowstone B-Prime)).